Reading from the N-terminus, the 308-residue chain is Olfactory receptor 2T7 (308 aa).

The Extracellular portion of the chain corresponds to 1 to 17; that stretch reads MPTLSFWVCSATPVSPG. A helical transmembrane segment spans residues 18-40; it reads FFALILLVFVTSIASNVVKIILI. At 41–51 the chain is on the cytoplasmic side; it reads HIDSRLHTPMY. The helical transmembrane segment at 52 to 74 threads the bilayer; the sequence is FLLSQLSLRDILYISTIVPKMLV. Residues 75-88 are Extracellular-facing; it reads DQVMSQRAISFAGC. Cysteines 88 and 170 form a disulfide. Residues 89 to 109 form a helical membrane-spanning segment; sequence TAQHFLYLTLAGAEFFLLGLM. Over 110–130 the chain is Cytoplasmic; that stretch reads SCDRYVAICNPLHYPDLMSRK. A helical transmembrane segment spans residues 131 to 151; the sequence is ICWLIVAAAWLGGSIDGFLLT. Residues 152–188 lie on the Extracellular side of the membrane; that stretch reads PVTMQFPFCASREINHFFCEVPALLKLSCTDTSAYET. A helical transmembrane segment spans residues 189-209; the sequence is AMYVCCIMMLLIPFSVISGSY. Over 210 to 235 the chain is Cytoplasmic; the sequence is TRILITVYRMSEAEGRRKAVATCSSH. Residues 236–256 form a helical membrane-spanning segment; it reads MVVVSLFYGAAMYTYVLPHSY. The Extracellular segment spans residues 257-262; sequence HTPEQD. The helical transmembrane segment at 263–283 threads the bilayer; sequence KAVSAFYTILTPMLNPLIYSL. Residues 284-308 lie on the Cytoplasmic side of the membrane; it reads RNKDVTGALQKVVGRCVSSGKVTTF.

Belongs to the G-protein coupled receptor 1 family.

Its subcellular location is the cell membrane. In terms of biological role, odorant receptor. The chain is Olfactory receptor 2T7 (OR2T7) from Homo sapiens (Human).